The chain runs to 261 residues: Imidazole glycerol phosphate synthase subunit HisF (261 aa).

Residues D12 and D131 contribute to the active site.

It belongs to the HisA/HisF family. Heterodimer of HisH and HisF.

It is found in the cytoplasm. The catalysed reaction is 5-[(5-phospho-1-deoxy-D-ribulos-1-ylimino)methylamino]-1-(5-phospho-beta-D-ribosyl)imidazole-4-carboxamide + L-glutamine = D-erythro-1-(imidazol-4-yl)glycerol 3-phosphate + 5-amino-1-(5-phospho-beta-D-ribosyl)imidazole-4-carboxamide + L-glutamate + H(+). Its pathway is amino-acid biosynthesis; L-histidine biosynthesis; L-histidine from 5-phospho-alpha-D-ribose 1-diphosphate: step 5/9. In terms of biological role, IGPS catalyzes the conversion of PRFAR and glutamine to IGP, AICAR and glutamate. The HisF subunit catalyzes the cyclization activity that produces IGP and AICAR from PRFAR using the ammonia provided by the HisH subunit. This is Imidazole glycerol phosphate synthase subunit HisF from Brucella abortus (strain S19).